A 551-amino-acid polypeptide reads, in one-letter code: Probable glucomannan 4-beta-mannosyltransferase 3 (551 aa).

Residues alanine 60–phenylalanine 80 traverse the membrane as a helical segment. The active site involves aspartate 154. Substrate-binding residues include aspartate 213 and aspartate 215. Aspartate 307 is an active-site residue. The next 4 helical transmembrane spans lie at valine 386–isoleucine 406, valine 409–isoleucine 429, isoleucine 504–tyrosine 524, and tyrosine 525–glycine 545.

It belongs to the glycosyltransferase 2 family. Plant cellulose synthase-like A subfamily.

It localises to the golgi apparatus membrane. The catalysed reaction is GDP-mannose + (glucomannan)n = GDP + (glucomannan)n+1.. In terms of biological role, probable mannan synthase which consists of a 4-beta-mannosyltransferase activity on mannan using GDP-mannose. The beta-1,4-mannan product is the backbone for galactomannan synthesis by galactomannan galactosyltransferase. Galactomannan is a noncellulosic polysaccharides of plant cell wall. The chain is Probable glucomannan 4-beta-mannosyltransferase 3 from Oryza sativa subsp. japonica (Rice).